The primary structure comprises 301 residues: FNPCPYSDDTVKMIVLTRENKKYDFYTLDTIKNHNEFKDTITLKPHVFITHGFTSSATAENFVVMAKALLDKGNYLVILTDWRMAACTNEIAGLKLAYYPYAASNTRLVGNYIATVTKMLVQKYNVPMANIRLIGHSLGAHISGFAGKKVQELGLGKYPEIIGLDPAGPSFKSNDCSQRICETDANYVQIIHTSNRLGTERTLGTVDFYMNNGYNQPGCGLPIIGETCSHTRAVKYFTECIKHECCLIGVPKSKNPQPVSKCTRNECVCVGLNAKTYPKTGSFYVPVESKAPYCNNKGKII.

Cys4 and Cys87 are disulfide-bonded. Ser137 acts as the Nucleophile in catalysis. Asp165 acts as the Charge relay system in catalysis. 2 cysteine pairs are disulfide-bonded: Cys176–Cys181 and Cys219–Cys228. The active-site Charge relay system is His230. 3 cysteine pairs are disulfide-bonded: Cys245–Cys269, Cys246–Cys294, and Cys262–Cys267.

The protein belongs to the AB hydrolase superfamily. Lipase family. Expressed by the venom gland.

It is found in the secreted. The enzyme catalyses a 1,2-diacyl-sn-glycero-3-phosphocholine + H2O = a 2-acyl-sn-glycero-3-phosphocholine + a fatty acid + H(+). Its function is as follows. Catalyzes the hydrolysis of phosphatidylcholine with phospholipase A1 activity. May act as an allergen and induce hemolytic activity. The sequence is that of Phospholipase A1 from Vespa crabro (European hornet).